The chain runs to 243 residues: Precursor of CEP9 (243 aa).

An N-terminal signal peptide occupies residues 1 to 26 (MKLLSITLTSIVISMVFYQTPITTEA). Residues 28 to 44 (SLRKTNDQDHFKAGFTD) constitute a propeptide that is removed on maturation. Disordered stretches follow at residues 42-63 (FTDD…KKGN), 91-173 (KTGS…VKGF), and 189-243 (NGQD…EPKA). Hydroxyproline; partial is present on P48. Hydroxyproline is present on P51. A Hydroxyproline; partial modification is found at P55. Positions 60 to 96 (KKGNVNVEGFQDDFKPTEGRKLLKTNVQDHFKTGSTD) are excised as a propeptide. A hydroxyproline mark is found at P100, P103, and P107. Residues 112–148 (KKGNVNVESSEDDFKHKEGRKLQQTNGQNHFKTGSTD) constitute a propeptide that is removed on maturation. The span at 133 to 147 (LQQTNGQNHFKTGST) shows a compositional bias: polar residues. Hydroxyproline occurs at positions 152, 155, and 159. A propeptide spanning residues 164–200 (KKGHANVKGFKDDFAPTEEIRLQKMNGQDHFKTGSTD) is cleaved from the precursor. 3 positions are modified to hydroxyproline: P204, P207, and P211. A propeptide spanning residues 216–219 (KKGD) is cleaved from the precursor. P223, P226, and P230 each carry hydroxyproline. Residues 235–243 (AVKNDEPKA) constitute a propeptide that is removed on maturation.

The protein belongs to the C-terminally encoded plant signaling peptide (CEP) family. Interacts with CEP receptors (e.g. CEPR1 and CEPR2). In terms of processing, hydroxylated peptide is more active than non-hydroxylated peptide. Post-translationally, the mature small signaling peptide is generated by proteolytic processing of the longer precursor. In terms of tissue distribution, expressed in lateral root primordia and in lateral roots excluding the meristem region. Also present in the aerial tissues, such as leaf petioles and the shoot apex region.

The protein resides in the secreted. The protein localises to the extracellular space. It localises to the apoplast. Extracellular signaling peptide that represses primary root growth rate and significantly inhibits lateral root formation. Modulates leaf morphology. Regulates systemic nitrogen (N)-demand signaling. Mediates up-regulation of genes involved in N uptake and assimilation pathways. The chain is Precursor of CEP9 from Arabidopsis thaliana (Mouse-ear cress).